We begin with the raw amino-acid sequence, 198 residues long: Recombination protein RecR (198 aa).

The segment at 57–72 (CSVCGHITEEDPCYIC) adopts a C4-type zinc-finger fold. The Toprim domain maps to 80–175 (SVICVVEDDK…KVTRLAQGLS (96 aa)).

Belongs to the RecR family.

In terms of biological role, may play a role in DNA repair. It seems to be involved in an RecBC-independent recombinational process of DNA repair. It may act with RecF and RecO. This Staphylococcus carnosus (strain TM300) protein is Recombination protein RecR.